Consider the following 343-residue polypeptide: Biotin synthase (343 aa).

Positions 64–291 constitute a Radical SAM core domain; that stretch reads NTVQLSTLLS…RAMVRLSAGR (228 aa). Residues C79, C83, and C86 each contribute to the [4Fe-4S] cluster site. Residues C123, C154, C214, and R286 each contribute to the [2Fe-2S] cluster site.

This sequence belongs to the radical SAM superfamily. Biotin synthase family. Homodimer. Requires [4Fe-4S] cluster as cofactor. [2Fe-2S] cluster is required as a cofactor.

The enzyme catalyses (4R,5S)-dethiobiotin + (sulfur carrier)-SH + 2 reduced [2Fe-2S]-[ferredoxin] + 2 S-adenosyl-L-methionine = (sulfur carrier)-H + biotin + 2 5'-deoxyadenosine + 2 L-methionine + 2 oxidized [2Fe-2S]-[ferredoxin]. It functions in the pathway cofactor biosynthesis; biotin biosynthesis; biotin from 7,8-diaminononanoate: step 2/2. Functionally, catalyzes the conversion of dethiobiotin (DTB) to biotin by the insertion of a sulfur atom into dethiobiotin via a radical-based mechanism. The sequence is that of Biotin synthase from Cupriavidus necator (strain ATCC 17699 / DSM 428 / KCTC 22496 / NCIMB 10442 / H16 / Stanier 337) (Ralstonia eutropha).